The following is a 530-amino-acid chain: NMDA receptor synaptonuclear signaling and neuronal migration factor (530 aa).

Gly2 is lipidated: N-myristoyl glycine. Residues 2–233 (GAAASRRRAL…FSFQTATTTM (232 aa)) are necessary and sufficient to elicit dendritic processes and synaptic contacts. Disordered stretches follow at residues 34–67 (SQSHPENRNGADHLLADAYSGHDGSPEMQPAPQN) and 125–197 (KGRR…GRRK). Basic and acidic residues predominate over residues 38-48 (PENRNGADHLL). The segment covering 125–137 (KGRRQRHPHHHSQ) has biased composition (basic residues). Residues 153–162 (PCQSWAGSRQ) are compositionally biased toward polar residues. Ser204 bears the Phosphoserine mark. Positions 247–250 (RRKR) match the Nuclear localization signal motif. Positions 285 to 312 (RSFSRSWSDPTPMKADTSHDSRDSSDLQ) are disordered. Ser290 and Ser292 each carry phosphoserine. Residues 300 to 309 (DTSHDSRDSS) show a composition bias toward basic and acidic residues.

It belongs to the NSMF family. Interacts with KPNA1; the interaction occurs in a calcium-independent manner after synaptic NMDA receptor stimulation and is required for nuclear import of NSMF but is competed by CABP1. Interacts (via the central NLS-containing motif region) with CABP1 (via EF-hands 1 and 2); the interaction occurs in a calcium-dependent manner after synaptic NMDA receptor stimulation and prevents the nuclear import of NSMF. Cannot be competed by calmodulin. Proteolytically processed after NMDA receptor activation. Cleaved in a calcium-dependent and calpain-sensitive manner. Calpain cleavage is essential for the translocation process from dendrites to the nucleus. Highly expressed in adult and fetal brain. Weakly expressed in heart, liver, spleen, testis, small intestine, skeletal muscle, peripheral white blood cells and kidney.

The protein resides in the nucleus. Its subcellular location is the nucleus envelope. It localises to the nucleus membrane. It is found in the nucleus matrix. The protein localises to the cytoplasm. The protein resides in the cell cortex. Its subcellular location is the cytoskeleton. It localises to the cell membrane. It is found in the cell projection. The protein localises to the dendrite. The protein resides in the synapse. Its subcellular location is the synaptosome. It localises to the postsynaptic density. It is found in the membrane. In terms of biological role, couples NMDA-sensitive glutamate receptor signaling to the nucleus and triggers long-lasting changes in the cytoarchitecture of dendrites and spine synapse processes. Part of the cAMP response element-binding protein (CREB) shut-off signaling pathway. Stimulates outgrowth of olfactory axons and migration of gonadotropin-releasing hormone (GnRH) and luteinizing-hormone-releasing hormone (LHRH) neuronal cells. In Homo sapiens (Human), this protein is NMDA receptor synaptonuclear signaling and neuronal migration factor (NSMF).